The following is a 628-amino-acid chain: tRNA uridine 5-carboxymethylaminomethyl modification enzyme MnmG (628 aa).

Residue Gly-13–Gly-18 participates in FAD binding. An NAD(+)-binding site is contributed by Gly-273–Phe-287.

Belongs to the MnmG family. As to quaternary structure, homodimer. Heterotetramer of two MnmE and two MnmG subunits. It depends on FAD as a cofactor.

It is found in the cytoplasm. In terms of biological role, NAD-binding protein involved in the addition of a carboxymethylaminomethyl (cmnm) group at the wobble position (U34) of certain tRNAs, forming tRNA-cmnm(5)s(2)U34. The chain is tRNA uridine 5-carboxymethylaminomethyl modification enzyme MnmG from Buchnera aphidicola subsp. Acyrthosiphon pisum (strain Tuc7).